Consider the following 209-residue polypeptide: FMN-dependent NADH:quinone oxidoreductase 2 (209 aa).

An FMN-binding site is contributed by 17 to 19 (SAS).

This sequence belongs to the azoreductase type 1 family. As to quaternary structure, homodimer. Requires FMN as cofactor.

The enzyme catalyses 2 a quinone + NADH + H(+) = 2 a 1,4-benzosemiquinone + NAD(+). The catalysed reaction is N,N-dimethyl-1,4-phenylenediamine + anthranilate + 2 NAD(+) = 2-(4-dimethylaminophenyl)diazenylbenzoate + 2 NADH + 2 H(+). In terms of biological role, quinone reductase that provides resistance to thiol-specific stress caused by electrophilic quinones. Functionally, also exhibits azoreductase activity. Catalyzes the reductive cleavage of the azo bond in aromatic azo compounds to the corresponding amines. The chain is FMN-dependent NADH:quinone oxidoreductase 2 from Lactiplantibacillus plantarum (strain ATCC BAA-793 / NCIMB 8826 / WCFS1) (Lactobacillus plantarum).